The primary structure comprises 868 residues: MRFTTTIWRPPSLENFKPKFRIYANGVAQVRIYCFGTVSSSRLYNAHNLFDKSPGRDRESYISLLFGFSRDGRTQEAKRLFLNIHRLGMEMDCSIFSSVLKVSATLCDELFGRQLHCQCIKFGFLDDVSVGTSLVDTYMKGSNFKDGRKVFDEMKERNVVTWTTLISGYARNSMNDEVLTLFMRMQNEGTQPNSFTFAAALGVLAEEGVGGRGLQVHTVVVKNGLDKTIPVSNSLINLYLKCGNVRKARILFDKTEVKSVVTWNSMISGYAANGLDLEALGMFYSMRLNYVRLSESSFASVIKLCANLKELRFTEQLHCSVVKYGFLFDQNIRTALMVAYSKCTAMLDALRLFKEIGCVGNVVSWTAMISGFLQNDGKEEAVDLFSEMKRKGVRPNEFTYSVILTALPVISPSEVHAQVVKTNYERSSTVGTALLDAYVKLGKVEEAAKVFSGIDDKDIVAWSAMLAGYAQTGETEAAIKMFGELTKGGIKPNEFTFSSILNVCAATNASMGQGKQFHGFAIKSRLDSSLCVSSALLTMYAKKGNIESAEEVFKRQREKDLVSWNSMISGYAQHGQAMKALDVFKEMKKRKVKMDGVTFIGVFAACTHAGLVEEGEKYFDIMVRDCKIAPTKEHNSCMVDLYSRAGQLEKAMKVIENMPNPAGSTIWRTILAACRVHKKTELGRLAAEKIIAMKPEDSAAYVLLSNMYAESGDWQERAKVRKLMNERNVKKEPGYSWIEVKNKTYSFLAGDRSHPLKDQIYMKLEDLSTRLKDLGYEPDTSYVLQDIDDEHKEAVLAQHSERLAIAFGLIATPKGSPLLIIKNLRVCGDCHLVIKLIAKIEEREIVVRDSNRFHHFSSDGVCSCGDFW.

PPR repeat units follow at residues 57–91, 92–126, 127–157, 158–192, 193–227, 228–258, 259–293, 294–328, 329–359, 361–395, 396–426, 427–457, 458–492, 493–528, 529–559, 560–594, 595–625, and 631–661; these read DRES…GMEM, DCSI…GFLD, DVSV…MKER, NVVT…GTQP, NSFT…GLDK, TIPV…TEVK, SVVT…YVRL, SESS…GFLF, DQNI…IGCV, NVVS…GVRP, NEFT…NYER, SSTV…IDDK, DIVA…GIKP, NEFT…RLDS, SLCV…QREK, DLVS…KVKM, DGVT…MVRD, and TKEH…MPNP. Residues 666-741 form a type E motif region; that stretch reads IWRTILAACR…EPGYSWIEVK (76 aa). The interval 742-772 is type E(+) motif; it reads NKTYSFLAGDRSHPLKDQIYMKLEDLSTRLK. The segment at 773–868 is type DYW motif; sequence DLGYEPDTSY…DGVCSCGDFW (96 aa).

It belongs to the PPR family. PCMP-H subfamily.

The protein is Pentatricopeptide repeat-containing protein At2g27610 (PCMP-H60) of Arabidopsis thaliana (Mouse-ear cress).